The sequence spans 283 residues: Formamidopyrimidine-DNA glycosylase (283 aa).

Residue P2 is the Schiff-base intermediate with DNA of the active site. E3 serves as the catalytic Proton donor. The Proton donor; for beta-elimination activity role is filled by K58. H100, R119, and R162 together coordinate DNA. The FPG-type zinc finger occupies 247 to 283 (DVYGREGEPCRRAGCTGTVTRITQSGRSSFYCGKCQR). The active-site Proton donor; for delta-elimination activity is R273.

Belongs to the FPG family. Monomer. It depends on Zn(2+) as a cofactor.

It carries out the reaction Hydrolysis of DNA containing ring-opened 7-methylguanine residues, releasing 2,6-diamino-4-hydroxy-5-(N-methyl)formamidopyrimidine.. It catalyses the reaction 2'-deoxyribonucleotide-(2'-deoxyribose 5'-phosphate)-2'-deoxyribonucleotide-DNA = a 3'-end 2'-deoxyribonucleotide-(2,3-dehydro-2,3-deoxyribose 5'-phosphate)-DNA + a 5'-end 5'-phospho-2'-deoxyribonucleoside-DNA + H(+). Functionally, involved in base excision repair of DNA damaged by oxidation or by mutagenic agents. Acts as a DNA glycosylase that recognizes and removes damaged bases. Has a preference for oxidized purines, such as 7,8-dihydro-8-oxoguanine (8-oxoG). Has AP (apurinic/apyrimidinic) lyase activity and introduces nicks in the DNA strand. Cleaves the DNA backbone by beta-delta elimination to generate a single-strand break at the site of the removed base with both 3'- and 5'-phosphates. The polypeptide is Formamidopyrimidine-DNA glycosylase (Ruegeria sp. (strain TM1040) (Silicibacter sp.)).